We begin with the raw amino-acid sequence, 310 residues long: uncharacterized protein (310 aa).

5 consecutive transmembrane segments (helical) span residues 10–30 (AVLS…AYAI), 44–64 (TVNL…ATPA), 78–98 (FSSG…GYSA), 113–133 (LGIA…WILW), and 161–181 (VVVA…PLIA). A compositionally biased stretch (basic and acidic residues) spans 285–297 (PLEDPKSWQHPDE). A disordered region spans residues 285–310 (PLEDPKSWQHPDEFPPSAPLNRDKPN).

Belongs to the cation diffusion facilitator (CDF) transporter (TC 2.A.4) family.

It localises to the cell membrane. This is an uncharacterized protein from Synechocystis sp. (strain ATCC 27184 / PCC 6803 / Kazusa).